Reading from the N-terminus, the 817-residue chain is Protein EFR3 homolog B (817 aa).

Residues S212, S214, and S216 each carry the phosphoserine modification.

It belongs to the EFR3 family. Component of a phosphatidylinositol 4-kinase (PI4K) complex, composed of PI4KA, EFR3 (EFR3A or EFR3B), TTC7 (TTC7A or TTC7B) and HYCC (HYCC1 or HYCC2). In terms of processing, palmitoylated at its N-terminus, anchoring the protein to the plasma membrane. Widely expressed.

The protein localises to the cell membrane. It is found in the cytoplasm. Its subcellular location is the cytosol. Functionally, component of a complex required to localize phosphatidylinositol 4-kinase (PI4K) to the plasma membrane. The complex acts as a regulator of phosphatidylinositol 4-phosphate (PtdIns(4)P) synthesis. In the complex, EFR3B probably acts as the membrane-anchoring component. Also involved in responsiveness to G-protein-coupled receptors; it is however unclear whether this role is direct or indirect. This Mus musculus (Mouse) protein is Protein EFR3 homolog B (Efr3b).